The sequence spans 343 residues: Anthranilate phosphoribosyltransferase (343 aa).

Residues G84, 87–88, T92, 94–97, 112–120, and S124 each bind 5-phospho-alpha-D-ribose 1-diphosphate; these read GD, NIST, and KHGNRSVSS. Anthranilate is bound at residue G84. S96 provides a ligand contact to Mg(2+). N115 is a binding site for anthranilate. R170 serves as a coordination point for anthranilate. The Mg(2+) site is built by D229 and E230.

The protein belongs to the anthranilate phosphoribosyltransferase family. Homodimer. Mg(2+) is required as a cofactor.

It catalyses the reaction N-(5-phospho-beta-D-ribosyl)anthranilate + diphosphate = 5-phospho-alpha-D-ribose 1-diphosphate + anthranilate. It functions in the pathway amino-acid biosynthesis; L-tryptophan biosynthesis; L-tryptophan from chorismate: step 2/5. Functionally, catalyzes the transfer of the phosphoribosyl group of 5-phosphorylribose-1-pyrophosphate (PRPP) to anthranilate to yield N-(5'-phosphoribosyl)-anthranilate (PRA). The polypeptide is Anthranilate phosphoribosyltransferase (Stenotrophomonas maltophilia (strain R551-3)).